The following is a 503-amino-acid chain: Cytochrome P450 3A12 (503 aa).

Position 442 (C442) interacts with heme.

Belongs to the cytochrome P450 family. Heme is required as a cofactor.

The protein localises to the endoplasmic reticulum membrane. It is found in the microsome membrane. The catalysed reaction is an organic molecule + reduced [NADPH--hemoprotein reductase] + O2 = an alcohol + oxidized [NADPH--hemoprotein reductase] + H2O + H(+). In terms of biological role, cytochromes P450 are a group of heme-thiolate monooxygenases. In liver microsomes, this enzyme is involved in an NADPH-dependent electron transport pathway. It oxidizes a variety of structurally unrelated compounds, including steroids, fatty acids, and xenobiotics. The chain is Cytochrome P450 3A12 (CYP3A12) from Canis lupus familiaris (Dog).